We begin with the raw amino-acid sequence, 185 residues long: MIEASKLKAGMTFESEGKLIRVLEASHHKPGKGNTIMRMKLRDVRTGSTFDTTYRPDEKFEQAIIETVPAQYLYKMDDTAYFMNTDTYDQYEIPVANVEQELLYILENSDVKIQFYGSEVIGVTVPTTVELTVAETQPSIKGATVTGSGKPATLETGLVVNVPDFIEAGQKLIINTAEGTYVSRA.

Belongs to the elongation factor P family.

The protein localises to the cytoplasm. It participates in protein biosynthesis; polypeptide chain elongation. In terms of biological role, involved in peptide bond synthesis. Stimulates efficient translation and peptide-bond synthesis on native or reconstituted 70S ribosomes in vitro. Probably functions indirectly by altering the affinity of the ribosome for aminoacyl-tRNA, thus increasing their reactivity as acceptors for peptidyl transferase. The chain is Elongation factor P from Streptococcus pyogenes serotype M28 (strain MGAS6180).